Consider the following 210-residue polypeptide: Putative 3-methyladenine DNA glycosylase (210 aa).

A disordered region spans residues 180-210 (SRPPPGAAAARAARAPAAPAPRPRRPRGSGP). Over residues 186–196 (AAAARAARAPA) the composition is skewed to low complexity. The span at 201-210 (RPRRPRGSGP) shows a compositional bias: basic residues.

The protein belongs to the DNA glycosylase MPG family.

The polypeptide is Putative 3-methyladenine DNA glycosylase (Anaeromyxobacter dehalogenans (strain 2CP-1 / ATCC BAA-258)).